Here is a 273-residue protein sequence, read N- to C-terminus: Transposable element Tcb2 transposase (273 aa).

Belongs to the transposase 5 family.

The protein localises to the nucleus. Probably essential for transposable element Tcb2 transposition. The protein is Transposable element Tcb2 transposase of Caenorhabditis briggsae.